The sequence spans 352 residues: Molybdenum import ATP-binding protein ModC (352 aa).

Residues 1–229 (MLELNFSQTL…SVMNPWLPKE (229 aa)) form the ABC transporter domain. Residue 31–38 (GVSGAGKT) coordinates ATP. A Mop domain is found at 289 to 352 (QTSIRNVLRA…AQIKSVSITA (64 aa)).

It belongs to the ABC transporter superfamily. Molybdate importer (TC 3.A.1.8) family. The complex is composed of two ATP-binding proteins (ModC), two transmembrane proteins (ModB) and a solute-binding protein (ModA).

It localises to the cell inner membrane. The catalysed reaction is molybdate(out) + ATP + H2O = molybdate(in) + ADP + phosphate + H(+). Part of the ABC transporter complex ModABC involved in molybdenum import. Responsible for energy coupling to the transport system. In Escherichia coli O6:K15:H31 (strain 536 / UPEC), this protein is Molybdenum import ATP-binding protein ModC.